The primary structure comprises 394 residues: Aspergillopepsin-1 (394 aa).

Residues 1–20 (MVVFSKVTAAVFGLATIASA) form the signal peptide. Residues 21 to 69 (APAPPTRKGFTVQQQARPAQKKQVNLPAMYAHALTKFGGSVPESVKVAA) constitute a propeptide, activation peptide. The 307-residue stretch at 85–391 (YLTPVNVGGT…DSEGPRLGFA (307 aa)) folds into the Peptidase A1 domain. Residues Asp101 and Asp283 contribute to the active site. Cys319 and Cys354 form a disulfide bridge.

It belongs to the peptidase A1 family. Monomer.

The protein resides in the secreted. The enzyme catalyses Hydrolysis of proteins with broad specificity. Generally favors hydrophobic residues in P1 and P1', but also accepts Lys in P1, which leads to activation of trypsinogen. Does not clot milk.. Functionally, secreted aspartic endopeptidase that allows assimilation of proteinaceous substrates. The scissile peptide bond is attacked by a nucleophilic water molecule activated by two aspartic residues in the active site. Shows a broad primary substrate specificity. Favors hydrophobic residues at the P1 and P1' positions, but also accepts a lysine residue in the P1 position, leading to the activation of trypsinogen and chymotrypsinogen A. This chain is Aspergillopepsin-1 (pepA), found in Aspergillus clavatus (strain ATCC 1007 / CBS 513.65 / DSM 816 / NCTC 3887 / NRRL 1 / QM 1276 / 107).